The sequence spans 359 residues: Mannose-1-phosphate guanylyltransferase (359 aa).

It belongs to the transferase hexapeptide repeat family.

It catalyses the reaction alpha-D-mannose 1-phosphate + GTP + H(+) = GDP-alpha-D-mannose + diphosphate. It participates in cell wall biogenesis. The protein operates within nucleotide-sugar biosynthesis; GDP-alpha-D-mannose biosynthesis; GDP-alpha-D-mannose from alpha-D-mannose 1-phosphate (GTP route): step 1/1. Catalyzes the formation of GDP-mannose from D-mannose-1-phosphate and GTP. Plays an important role in the synthesis of different glycoconjugates which are responsible for cell wall structure, virulence and immunomodulatory activity of M.tuberculosis. The protein is Mannose-1-phosphate guanylyltransferase of Mycobacterium tuberculosis (strain ATCC 25618 / H37Rv).